The sequence spans 692 residues: Elongation factor G (692 aa).

The tr-type G domain maps to Glu8–Val282. GTP is bound by residues Ala17–Thr24, Asp81–His85, and Asn135–Asp138.

It belongs to the TRAFAC class translation factor GTPase superfamily. Classic translation factor GTPase family. EF-G/EF-2 subfamily.

The protein resides in the cytoplasm. Functionally, catalyzes the GTP-dependent ribosomal translocation step during translation elongation. During this step, the ribosome changes from the pre-translocational (PRE) to the post-translocational (POST) state as the newly formed A-site-bound peptidyl-tRNA and P-site-bound deacylated tRNA move to the P and E sites, respectively. Catalyzes the coordinated movement of the two tRNA molecules, the mRNA and conformational changes in the ribosome. The protein is Elongation factor G of Carboxydothermus hydrogenoformans (strain ATCC BAA-161 / DSM 6008 / Z-2901).